The chain runs to 156 residues: Transcription elongation factor GreA (156 aa).

A coiled-coil region spans residues 1–84; sequence MAKYTISKHR…IEDVLRSTDE (84 aa).

Belongs to the GreA/GreB family.

Functionally, necessary for efficient RNA polymerase transcription elongation past template-encoded arresting sites. The arresting sites in DNA have the property of trapping a certain fraction of elongating RNA polymerases that pass through, resulting in locked ternary complexes. Cleavage of the nascent transcript by cleavage factors such as GreA or GreB allows the resumption of elongation from the new 3'terminus. GreA releases sequences of 2 to 3 nucleotides. The sequence is that of Transcription elongation factor GreA from Ureaplasma parvum serovar 3 (strain ATCC 27815 / 27 / NCTC 11736).